The chain runs to 290 residues: Inositol-1-monophosphatase (290 aa).

Positions 83, 104, 106, and 107 each coordinate Mg(2+). Glu-83 is a binding site for substrate. Substrate is bound by residues 106–109, Arg-206, and Asp-235; that span reads IDGT. Mg(2+) is bound at residue Asp-235.

Belongs to the inositol monophosphatase superfamily. Mg(2+) serves as cofactor.

The enzyme catalyses a myo-inositol phosphate + H2O = myo-inositol + phosphate. The protein is Inositol-1-monophosphatase (suhB) of Mycobacterium bovis (strain ATCC BAA-935 / AF2122/97).